A 223-amino-acid polypeptide reads, in one-letter code: Neurotrophic factor BDNF precursor form (223 aa).

An N-terminal signal peptide occupies residues 1 to 5 (SCMKA). A propeptide spanning residues 6–114 (APMKEVSIRG…AANMSMRVRR (109 aa)) is cleaved from the precursor. Asn-107 is a glycosylation site (N-linked (GlcNAc...) asparagine). 2 disulfide bridges follow: Cys-127/Cys-194 and Cys-172/Cys-223.

This sequence belongs to the NGF-beta family.

It localises to the secreted. Functionally, promotes the survival of neuronal populations that are all located either in the central nervous system or directly connected to it. The chain is Neurotrophic factor BDNF precursor form (BDNF) from Calabaria reinhardtii (Calabar boa).